The chain runs to 317 residues: Acetyl-coenzyme A carboxylase carboxyl transferase subunit alpha (317 aa).

The CoA carboxyltransferase C-terminal domain maps to 40 to 294; it reads RLQKKSEELT…KARLLTDLED (255 aa).

The protein belongs to the AccA family. In terms of assembly, acetyl-CoA carboxylase is a heterohexamer composed of biotin carboxyl carrier protein (AccB), biotin carboxylase (AccC) and two subunits each of ACCase subunit alpha (AccA) and ACCase subunit beta (AccD).

Its subcellular location is the cytoplasm. It carries out the reaction N(6)-carboxybiotinyl-L-lysyl-[protein] + acetyl-CoA = N(6)-biotinyl-L-lysyl-[protein] + malonyl-CoA. It functions in the pathway lipid metabolism; malonyl-CoA biosynthesis; malonyl-CoA from acetyl-CoA: step 1/1. Component of the acetyl coenzyme A carboxylase (ACC) complex. First, biotin carboxylase catalyzes the carboxylation of biotin on its carrier protein (BCCP) and then the CO(2) group is transferred by the carboxyltransferase to acetyl-CoA to form malonyl-CoA. This chain is Acetyl-coenzyme A carboxylase carboxyl transferase subunit alpha, found in Actinobacillus succinogenes (strain ATCC 55618 / DSM 22257 / CCUG 43843 / 130Z).